We begin with the raw amino-acid sequence, 163 residues long: N5-carboxyaminoimidazole ribonucleotide mutase (163 aa).

The substrate site is built by serine 11, aspartate 14, and arginine 41.

Belongs to the AIR carboxylase family. Class I subfamily.

It catalyses the reaction 5-carboxyamino-1-(5-phospho-D-ribosyl)imidazole + H(+) = 5-amino-1-(5-phospho-D-ribosyl)imidazole-4-carboxylate. Its pathway is purine metabolism; IMP biosynthesis via de novo pathway; 5-amino-1-(5-phospho-D-ribosyl)imidazole-4-carboxylate from 5-amino-1-(5-phospho-D-ribosyl)imidazole (N5-CAIR route): step 2/2. In terms of biological role, catalyzes the conversion of N5-carboxyaminoimidazole ribonucleotide (N5-CAIR) to 4-carboxy-5-aminoimidazole ribonucleotide (CAIR). The polypeptide is N5-carboxyaminoimidazole ribonucleotide mutase (Pseudomonas aeruginosa (strain ATCC 15692 / DSM 22644 / CIP 104116 / JCM 14847 / LMG 12228 / 1C / PRS 101 / PAO1)).